We begin with the raw amino-acid sequence, 401 residues long: Acetate kinase (401 aa).

Residue asparagine 7 coordinates Mg(2+). Position 14 (lysine 14) interacts with ATP. Arginine 90 lines the substrate pocket. Aspartate 147 acts as the Proton donor/acceptor in catalysis. Residues 207–211 (HLGNG), 282–284 (DFR), and 330–334 (GVGEN) each bind ATP. A Mg(2+)-binding site is contributed by glutamate 383.

Belongs to the acetokinase family. As to quaternary structure, homodimer. Mg(2+) serves as cofactor. The cofactor is Mn(2+).

Its subcellular location is the cytoplasm. The enzyme catalyses acetate + ATP = acetyl phosphate + ADP. It participates in metabolic intermediate biosynthesis; acetyl-CoA biosynthesis; acetyl-CoA from acetate: step 1/2. Functionally, catalyzes the formation of acetyl phosphate from acetate and ATP. Can also catalyze the reverse reaction. The chain is Acetate kinase from Clostridium novyi (strain NT).